Reading from the N-terminus, the 95-residue chain is Integration host factor subunit beta (95 aa).

This sequence belongs to the bacterial histone-like protein family. As to quaternary structure, heterodimer of an alpha and a beta chain.

Its function is as follows. This protein is one of the two subunits of integration host factor, a specific DNA-binding protein that functions in genetic recombination as well as in transcriptional and translational control. The sequence is that of Integration host factor subunit beta from Shewanella halifaxensis (strain HAW-EB4).